A 253-amino-acid chain; its full sequence is Sulfate transporter CysZ (253 aa).

4 consecutive transmembrane segments (helical) span residues 31-51 (FVIL…WWLF), 75-95 (LLWP…FSTI), 151-171 (IVLL…PVLW), and 222-242 (IPVL…AMWV).

The protein belongs to the CysZ family.

The protein resides in the cell inner membrane. Functionally, high affinity, high specificity proton-dependent sulfate transporter, which mediates sulfate uptake. Provides the sulfur source for the cysteine synthesis pathway. This Citrobacter koseri (strain ATCC BAA-895 / CDC 4225-83 / SGSC4696) protein is Sulfate transporter CysZ.